Reading from the N-terminus, the 347-residue chain is Acetylglutamate kinase, chloroplastic (347 aa).

The transit peptide at 1–50 directs the protein to the chloroplast; that stretch reads MATVTSNASPKSFSFTVSNPFKTLIPNKSPSLCYPTRNKNHHRLGFSIKA. Residue threonine 51 is modified to N-acetylthreonine. 94–95 contributes to the ATP binding site; it reads GA. N-acetyl-L-glutamate is bound by residues glycine 126, arginine 148, and 242–245; that span reads NINA. Lysine 260 is an L-arginine binding site. Residues 265 to 266 and leucine 271 contribute to the ATP site; that span reads TD. Lysine 282 provides a ligand contact to L-arginine. Position 297 to 305 (297 to 305) interacts with ATP; it reads KVAGGMIPK. L-arginine contacts are provided by residues 334–337 and glycine 342; that span reads EIMS.

The protein belongs to the acetylglutamate kinase family. ArgB subfamily. Interacts with GLB1. Interaction is dependent of MgATP and inhibited by 2-oxoglutarate, arginine, glutamate, citrate, and oxaloacetate.

It is found in the plastid. It localises to the chloroplast stroma. The catalysed reaction is N-acetyl-L-glutamate + ATP = N-acetyl-L-glutamyl 5-phosphate + ADP. It participates in amino-acid biosynthesis; L-arginine biosynthesis; N(2)-acetyl-L-ornithine from L-glutamate: step 2/4. Inhibited by arginine. Inhibition is relieved by binding to GLB1. Functionally, involved in the arginine biosynthetic pathway via the intermediate compound ornithine. In Arabidopsis thaliana (Mouse-ear cress), this protein is Acetylglutamate kinase, chloroplastic.